Consider the following 325-residue polypeptide: Aminotransferase tasG (325 aa).

Gly-35 contributes to the substrate binding site. Pyridoxal 5'-phosphate is bound by residues 89 to 90 (TW), Asn-143, Tyr-174, and 203 to 205 (SFA). Residue Asn-143 participates in substrate binding. Lys-206 carries the post-translational modification N6-(pyridoxal phosphate)lysine. Position 214 (Arg-214) interacts with pyridoxal 5'-phosphate.

This sequence belongs to the class-I pyridoxal-phosphate-dependent aminotransferase family. In terms of assembly, homodimer. It depends on pyridoxal 5'-phosphate as a cofactor.

The protein operates within secondary metabolite biosynthesis. Aminotransferase; part of the gene cluster that mediates the biosynthesis of the tetramic acids Sch210971 and Sch210972, potential anti-HIV fungal natural product that contain a decalin core. The PKS module of tasS together with the enoylreductase tasC catalyze the formation of the polyketide unit which is then conjugated to 4-hydroxyl-4-methyl glutamate (HMG) by the condensation domain of the tasS NRPS module. One unique structural feature of Sch210971 and Sch210972 is the tetramic acid motif proposed to be derived from the non-proteinogenic amino acid HMG, by a Dieckmann-type condensation catalyzed by the reductase domain of tasS. The aldolase tasA catalyzes the aldol condensation of 2 molecules of pyruvic acid to yield the intermediate 4-hydroxyl-4-methyl-2-oxoglutarate (HMOG), which can then be stereoselectively transaminated, may be by tasG, to form HMG. The Diels-Alderase tas3 then uses the Dieckmann product of tasS as substrate and catalyzes the Diels-Alder cycloaddition to form the decalin ring of Sch210971 and Sch210972. This chain is Aminotransferase tasG, found in Hapsidospora irregularis.